A 446-amino-acid chain; its full sequence is DDB1- and CUL4-associated factor 12-A (446 aa).

The segment covering 1–12 has biased composition (basic residues); sequence MTRRSVSRKRRA. Residues 1–32 are disordered; it reads MTRRSVSRKRRANPGSGPGEQSDWDHSAHKRK. 4 WD repeats span residues 132-173, 177-215, 245-284, and 333-370; these read SHQS…PVCV, GHND…VNKS, PVNC…SKLL, and EQGS…FLED.

It belongs to the WD repeat DCAF12 family. As to quaternary structure, component of the DCX(DCAF12) E3 ubiquitin ligase complex, at least composed of cul4 (cul4a or cul4b), ddb1, dcaf12 and rbx1.

Its subcellular location is the cytoplasm. It localises to the cytoskeleton. The protein localises to the microtubule organizing center. The protein resides in the centrosome. It is found in the nucleus. The protein operates within protein modification; protein ubiquitination. Its function is as follows. Substrate-recognition component of a DCX (DDB1-CUL4-X-box) E3 ubiquitin-protein ligase complex of the DesCEND (destruction via C-end degrons) pathway, which recognizes a C-degron located at the extreme C terminus of target proteins, leading to their ubiquitination and degradation. The C-degron recognized by the DesCEND pathway is usually a motif of less than ten residues and can be present in full-length proteins, truncated proteins or proteolytically cleaved forms. The DCX(DCAF12) complex specifically recognizes proteins with a diglutamate (Glu-Glu) at the C-terminus leading to their ubiquitination and degradation. Also directly recognizes the C-terminal glutamate-leucine (Glu-Leu) degron as an alternative degron in proteins leading to their ubiquitination and degradation. This chain is DDB1- and CUL4-associated factor 12-A (dcaf12-a), found in Xenopus laevis (African clawed frog).